The primary structure comprises 177 residues: Large ribosomal subunit protein uL6 (177 aa).

Belongs to the universal ribosomal protein uL6 family. As to quaternary structure, part of the 50S ribosomal subunit.

This protein binds to the 23S rRNA, and is important in its secondary structure. It is located near the subunit interface in the base of the L7/L12 stalk, and near the tRNA binding site of the peptidyltransferase center. The polypeptide is Large ribosomal subunit protein uL6 (Bordetella pertussis (strain Tohama I / ATCC BAA-589 / NCTC 13251)).